The chain runs to 1442 residues: Cleavage and polyadenylation specificity factor subunit 1 (1442 aa).

The protein belongs to the CPSF1 family. In terms of assembly, component of the CPSF complex, at least composed of CPSF160, CPSF100, CPSF73-I, CPSF73-II, CPSF30, FY and FIPS5. Forms a complex with cleavage and polyadenylation specificity factor (CPSF) subunits FY, CPSF30, CPSF73-I, CPSF 73-II and CPSF100.

Its subcellular location is the nucleus. Its function is as follows. CPSF plays a key role in pre-mRNA 3'-end formation, recognizing the AAUAAA signal sequence and interacting with poly(A)polymerase and other factors to bring about cleavage and poly(A) addition. This subunit is involved in the RNA recognition step of the polyadenylation reaction. The chain is Cleavage and polyadenylation specificity factor subunit 1 (CPSF160) from Arabidopsis thaliana (Mouse-ear cress).